Consider the following 256-residue polypeptide: Ubiquinone/menaquinone biosynthesis C-methyltransferase UbiE (256 aa).

S-adenosyl-L-methionine contacts are provided by residues Thr79, Asp100, and Asp128 to Ala129.

It belongs to the class I-like SAM-binding methyltransferase superfamily. MenG/UbiE family.

The catalysed reaction is a 2-demethylmenaquinol + S-adenosyl-L-methionine = a menaquinol + S-adenosyl-L-homocysteine + H(+). It carries out the reaction a 2-methoxy-6-(all-trans-polyprenyl)benzene-1,4-diol + S-adenosyl-L-methionine = a 5-methoxy-2-methyl-3-(all-trans-polyprenyl)benzene-1,4-diol + S-adenosyl-L-homocysteine + H(+). Its pathway is quinol/quinone metabolism; menaquinone biosynthesis; menaquinol from 1,4-dihydroxy-2-naphthoate: step 2/2. It participates in cofactor biosynthesis; ubiquinone biosynthesis. In terms of biological role, methyltransferase required for the conversion of demethylmenaquinol (DMKH2) to menaquinol (MKH2) and the conversion of 2-polyprenyl-6-methoxy-1,4-benzoquinol (DDMQH2) to 2-polyprenyl-3-methyl-6-methoxy-1,4-benzoquinol (DMQH2). This is Ubiquinone/menaquinone biosynthesis C-methyltransferase UbiE from Pseudomonas fluorescens (strain Pf0-1).